The chain runs to 194 residues: Leucyl/phenylalanyl-tRNA--protein transferase (194 aa).

It belongs to the L/F-transferase family.

The protein resides in the cytoplasm. The enzyme catalyses N-terminal L-lysyl-[protein] + L-leucyl-tRNA(Leu) = N-terminal L-leucyl-L-lysyl-[protein] + tRNA(Leu) + H(+). It catalyses the reaction N-terminal L-arginyl-[protein] + L-leucyl-tRNA(Leu) = N-terminal L-leucyl-L-arginyl-[protein] + tRNA(Leu) + H(+). It carries out the reaction L-phenylalanyl-tRNA(Phe) + an N-terminal L-alpha-aminoacyl-[protein] = an N-terminal L-phenylalanyl-L-alpha-aminoacyl-[protein] + tRNA(Phe). Functionally, functions in the N-end rule pathway of protein degradation where it conjugates Leu, Phe and, less efficiently, Met from aminoacyl-tRNAs to the N-termini of proteins containing an N-terminal arginine or lysine. This Chlorobaculum parvum (strain DSM 263 / NCIMB 8327) (Chlorobium vibrioforme subsp. thiosulfatophilum) protein is Leucyl/phenylalanyl-tRNA--protein transferase.